A 404-amino-acid polypeptide reads, in one-letter code: Propionate kinase (404 aa).

This sequence belongs to the acetokinase family. PduW subfamily.

It localises to the cytoplasm. It carries out the reaction propanoate + ATP = propanoyl phosphate + ADP. It participates in polyol metabolism; 1,2-propanediol degradation. Its function is as follows. Works with phosphate acetyltransferase (pta) to capture exogenous propionate and regenerate propionyl-CoA during degradation of 1,2-propanediol (1,2-PD). Functionally, expression of a cosmid containing the full 21-gene pdu operon in E.coli allows E.coli to grow on 1,2-propanediol (1,2-PD) with the appearance of bacterial microcompartments (BMC) in its cytoplasm. The chain is Propionate kinase from Citrobacter freundii.